We begin with the raw amino-acid sequence, 137 residues long: Large ribosomal subunit protein uL13 (137 aa).

Position 55 is a citrulline (Arg-55). Ser-73 carries the phosphoserine modification. Arg-136 is modified (citrulline).

The protein belongs to the universal ribosomal protein uL13 family. As to quaternary structure, component of the 60S ribosome. Component of the GAIT complex. Interacts with EIF4G1. In terms of processing, phosphorylation at Ser-73 upon interferon-gamma treatment in macrophages involves a DAPK1-DAPK3 kinase cascade and is causing release from the ribosome, association with the GAIT complex and subsequent involvement in transcript-selective translation inhibition. Citrullinated by PADI4.

The protein localises to the cytoplasm. Associated with ribosomes but is not required for canonical ribosome function and has extra-ribosomal functions. Component of the GAIT (gamma interferon-activated inhibitor of translation) complex which mediates interferon-gamma-induced transcript-selective translation inhibition in inflammation processes. Upon interferon-gamma activation and subsequent phosphorylation dissociates from the ribosome and assembles into the GAIT complex which binds to stem loop-containing GAIT elements in the 3'-UTR of diverse inflammatory mRNAs (such as ceruplasmin) and suppresses their translation. In the GAIT complex interacts with m7G cap-bound eIF4G at or near the eIF3-binding site and blocks the recruitment of the 43S ribosomal complex. Involved in methylation of rRNA. In Sus scrofa (Pig), this protein is Large ribosomal subunit protein uL13 (RPL13A).